Reading from the N-terminus, the 134-residue chain is Ribulose bisphosphate carboxylase small subunit (134 aa).

This sequence belongs to the RuBisCO small chain family. In terms of assembly, heterohexadecamer of 8 large and 8 small subunits.

Functionally, ruBisCO catalyzes two reactions: the carboxylation of D-ribulose 1,5-bisphosphate, the primary event in carbon dioxide fixation, as well as the oxidative fragmentation of the pentose substrate. Both reactions occur simultaneously and in competition at the same active site. Although the small subunit is not catalytic it is essential for maximal activity. In Bradyrhizobium diazoefficiens (strain JCM 10833 / BCRC 13528 / IAM 13628 / NBRC 14792 / USDA 110), this protein is Ribulose bisphosphate carboxylase small subunit.